A 98-amino-acid polypeptide reads, in one-letter code: EKC/KEOPS complex subunit GON7 (98 aa).

At Met1 the chain carries N-acetylmethionine. The segment at 55-98 (DAQGLAEDPDDALDGDDEDDAEDENNSGRTNSDGPSAKRPKPAS) is disordered. Over residues 61-79 (EDPDDALDGDDEDDAEDEN) the composition is skewed to acidic residues.

Component of the EKC/KEOPS complex composed of at least GON7, TP53RK, TPRKB, OSGEP and LAGE3; the whole complex dimerizes.

It is found in the nucleus. Its function is as follows. Component of the EKC/KEOPS complex that is required for the formation of a threonylcarbamoyl group on adenosine at position 37 (t(6)A37) in tRNAs that read codons beginning with adenine. The complex is probably involved in the transfer of the threonylcarbamoyl moiety of threonylcarbamoyl-AMP (TC-AMP) to the N6 group of A37. GON7 plays a supporting role to the catalytic subunit OSGEP in the complex. This chain is EKC/KEOPS complex subunit GON7, found in Mus musculus (Mouse).